A 235-amino-acid polypeptide reads, in one-letter code: 7-cyano-7-deazaguanine synthase (235 aa).

11–21 (FSGGQDSTTCV) is an ATP binding site. Zn(2+)-binding residues include Cys199, Cys214, Cys217, and Cys220.

The protein belongs to the QueC family. Zn(2+) is required as a cofactor.

It catalyses the reaction 7-carboxy-7-deazaguanine + NH4(+) + ATP = 7-cyano-7-deazaguanine + ADP + phosphate + H2O + H(+). Its pathway is purine metabolism; 7-cyano-7-deazaguanine biosynthesis. Catalyzes the ATP-dependent conversion of 7-carboxy-7-deazaguanine (CDG) to 7-cyano-7-deazaguanine (preQ(0)). The protein is 7-cyano-7-deazaguanine synthase of Janthinobacterium sp. (strain Marseille) (Minibacterium massiliensis).